We begin with the raw amino-acid sequence, 188 residues long: Threonylcarbamoyl-AMP synthase (188 aa).

Positions 3-188 (QLQPSAVATT…RSGQILRNGS (186 aa)) constitute a YrdC-like domain.

This sequence belongs to the SUA5 family. TsaC subfamily.

The protein localises to the cytoplasm. The enzyme catalyses L-threonine + hydrogencarbonate + ATP = L-threonylcarbamoyladenylate + diphosphate + H2O. Functionally, required for the formation of a threonylcarbamoyl group on adenosine at position 37 (t(6)A37) in tRNAs that read codons beginning with adenine. Catalyzes the conversion of L-threonine, HCO(3)(-)/CO(2) and ATP to give threonylcarbamoyl-AMP (TC-AMP) as the acyladenylate intermediate, with the release of diphosphate. In Shewanella frigidimarina (strain NCIMB 400), this protein is Threonylcarbamoyl-AMP synthase.